We begin with the raw amino-acid sequence, 574 residues long: MGRRHGWADEFRTFFPTLWLILAPLILSPLLFFGQEGKCAFVILTMSCYWVAEVVPLAVTSFIPMIALPFLGIVSIKEVAPKYFADTNIVFFNSLMLSLAVEECQLHKRIALKMLTYVGTRPHWLMAGFMIITSFISLWISDTACCALMAPIAYALLEEIMIPKMRPEEKENEIEVMKIFDKEDPEEKEKKKLDTSRLSVRDRGICKCMMLLVAHASLIGGTGTINSTGPNLIFRDNIEKNFPNEDHGISYLSWMAFAIPPMIFYMFSSWFIVQLQFLGPRHLMGMFREPTETEKQEEEVAKRAVWKSYDQLGPMTWAEKSTLVIFVLAVLSWVSSDPKVIPGWSDLFRKGYVTDSCSGLVAVFLLFIWPKKKPDFRIFRKDKSRPSVRQEPLIDWDCVRRRFPWSIILLLGAGFAISDAVRVSGLSSLIACSLNSTISKMPFFVMQIILSIVVVVMTEFSTNSATASIFIPISFKMAEAVGAHPLYFSIPTAIGPSFSFMLPMATPANAIVYETKTIRMIDMVSCGVFLNIFCIAITAINMNTWAFWLFNMGTYPDYALRHATNMTGNSSQCF.

11 helical membrane passes run 14 to 34 (FFPT…LFFG), 54 to 74 (VVPL…LGIV), 124 to 144 (WLMA…SDTA), 205 to 225 (ICKC…TGTI), 253 to 273 (SWMA…WFIV), 323 to 343 (LVIF…VIPG), 350 to 370 (KGYV…FIWP), 403 to 423 (FPWS…AVRV), 441 to 461 (MPFF…TEFS), 485 to 505 (PLYF…LPMA), and 520 to 540 (MIDM…ITAI). N-linked (GlcNAc...) asparagine glycosylation is found at Asn-565 and Asn-569.

The protein belongs to the SLC13A/DASS transporter (TC 2.A.47) family. NADC subfamily.

It localises to the membrane. This is an uncharacterized protein from Caenorhabditis elegans.